The chain runs to 1004 residues: Caspase recruitment domain-containing protein 14 (1004 aa).

In terms of domain architecture, CARD spans Asp-15 to Gln-107. Residues Leu-128–Glu-409 adopt a coiled-coil conformation. The tract at residues Glu-409–Gln-568 is maintains the protein in an inactive state. The residue at position 544 (Ser-544) is a Phosphoserine. The 91-residue stretch at Gln-568–Thr-658 folds into the PDZ domain. The Guanylate kinase-like domain occupies Ala-807–Ala-990.

Interacts (via CARD domain) with BCL10 (via CARD domain). Forms a complex with MALT1 and BCL10; resulting in the formation of a CBM (CARD14-BLC10-MALT1) complex. Interacts with TRAF2, TRAF3 and TRAF6. Isoform 1 is detected in placenta and epidermal keratinocytes. Isoform 2 is detected in leukocytes and fetal brain.

The protein localises to the cytoplasm. Acts as a scaffolding protein that can activate the inflammatory transcription factor NF-kappa-B and p38/JNK MAP kinase signaling pathways. Forms a signaling complex with BCL10 and MALT1, and activates MALT1 proteolytic activity and inflammatory gene expression. MALT1 is indispensable for CARD14-induced activation of NF-kappa-B and p38/JNK MAP kinases. May play a role in signaling mediated by TRAF2, TRAF3 and TRAF6 and protects cells against apoptosis. Its function is as follows. Not able to activate the inflammatory transcription factor NF-kappa-B and may function as a dominant negative regulator. This is Caspase recruitment domain-containing protein 14 (CARD14) from Homo sapiens (Human).